A 305-amino-acid polypeptide reads, in one-letter code: Mas-related G-protein coupled receptor member A7 (305 aa).

At 1-17 (MDETSPRSIDIESLIPN) the chain is on the extracellular side. The chain crosses the membrane as a helical span at residues 18-38 (LMIIIFGLVGLTGNAIVLWLL). The Cytoplasmic segment spans residues 39–46 (GFCLHRNA). Residues 47–67 (FLVYILNLALADFLFLLCHFI) traverse the membrane as a helical segment. Topologically, residues 68-81 (NSAMFLLKVPIPNG) are extracellular. Residues 82-102 (IFVYCFYTIKMVLYITGLSML) form a helical membrane-spanning segment. The Cytoplasmic portion of the chain corresponds to 103–129 (SAISTERCLSVLCPIWYHCRRPEHTST). The chain crosses the membrane as a helical span at residues 130 to 150 (VMCAVIWIFSVLICILKEYFC). At 151-167 (DFFGTKLGNYYVCQASN) the chain is on the extracellular side. Residues 168–188 (FFMGAYLMFLFVVLCLSTLAL) form a helical membrane-spanning segment. The Cytoplasmic portion of the chain corresponds to 189–211 (LARLFCGAEKMKFTRLFVTIMLT). Residues 212 to 232 (ILVFLLCGLPWGFFWFLLIWI) form a helical membrane-spanning segment. Over 233-244 (KGGFSVLDYRLY) the chain is Extracellular. The chain crosses the membrane as a helical span at residues 245 to 265 (LASIVLTVVNSCANPIIYFFV). The Cytoplasmic portion of the chain corresponds to 266 to 305 (GSFRHRLKHQTLKMVLQSALQDTPETHENMVEMSRIKAEQ).

Belongs to the G-protein coupled receptor 1 family. Mas subfamily. As to expression, expressed in a subset of sensory neurons that includes nociceptors. Expressed in the subclass of non-peptidergic sensory neurons that are IB4(+) and VR1(-).

It is found in the cell membrane. Its function is as follows. Orphan receptor. May be a receptor for RFamide-family neuropeptides such as NPFF and NPAF, which are analgesic in vivo. May regulate nociceptor function and/or development, including the sensation or modulation of pain. This Mus musculus (Mouse) protein is Mas-related G-protein coupled receptor member A7 (Mrgpra7).